Here is a 185-residue protein sequence, read N- to C-terminus: Shikimate kinase (185 aa).

Glycine 12–threonine 17 serves as a coordination point for ATP. Threonine 16 contacts Mg(2+). Substrate contacts are provided by aspartate 34, arginine 58, and glycine 79. ATP is bound at residue arginine 116. Position 135 (arginine 135) interacts with substrate.

Belongs to the shikimate kinase family. Monomer. Mg(2+) is required as a cofactor.

It localises to the cytoplasm. It catalyses the reaction shikimate + ATP = 3-phosphoshikimate + ADP + H(+). Its pathway is metabolic intermediate biosynthesis; chorismate biosynthesis; chorismate from D-erythrose 4-phosphate and phosphoenolpyruvate: step 5/7. Its function is as follows. Catalyzes the specific phosphorylation of the 3-hydroxyl group of shikimic acid using ATP as a cosubstrate. The polypeptide is Shikimate kinase (Corynebacterium jeikeium (strain K411)).